The sequence spans 430 residues: Glutamate-1-semialdehyde 2,1-aminomutase (430 aa).

Lysine 268 is modified (N6-(pyridoxal phosphate)lysine).

Belongs to the class-III pyridoxal-phosphate-dependent aminotransferase family. HemL subfamily. Requires pyridoxal 5'-phosphate as cofactor.

The protein resides in the cytoplasm. It catalyses the reaction (S)-4-amino-5-oxopentanoate = 5-aminolevulinate. The protein operates within porphyrin-containing compound metabolism; protoporphyrin-IX biosynthesis; 5-aminolevulinate from L-glutamyl-tRNA(Glu): step 2/2. The sequence is that of Glutamate-1-semialdehyde 2,1-aminomutase from Methanopyrus kandleri (strain AV19 / DSM 6324 / JCM 9639 / NBRC 100938).